A 297-amino-acid polypeptide reads, in one-letter code: Small ribosomal subunit protein uS2 (297 aa).

Positions 263–289 are enriched in low complexity; it reads AAPTSWEADGGDWAASSAAPAGESWAE. Residues 263–297 form a disordered region; it reads AAPTSWEADGGDWAASSAAPAGESWAETQPAEAKW.

The protein belongs to the universal ribosomal protein uS2 family. Component of the small ribosomal subunit. Mature ribosomes consist of a small (40S) and a large (60S) subunit. The 40S subunit contains about 33 different proteins and 1 molecule of RNA (18S). The 60S subunit contains about 49 different proteins and 3 molecules of RNA (25S, 5.8S and 5S). Interacts with rps21.

It localises to the cytoplasm. Required for the assembly and/or stability of the 40S ribosomal subunit. Required for the processing of the 20S rRNA-precursor to mature 18S rRNA in a late step of the maturation of 40S ribosomal subunits. The polypeptide is Small ribosomal subunit protein uS2 (rps0) (Neosartorya fischeri (strain ATCC 1020 / DSM 3700 / CBS 544.65 / FGSC A1164 / JCM 1740 / NRRL 181 / WB 181) (Aspergillus fischerianus)).